We begin with the raw amino-acid sequence, 430 residues long: MSLMTKLGLRTLVASCLIAVGGAAHAQLNVLVTGVGSTQFPIATANFANEANSPQQVSTIVRQDLQRSGKFTNIDAGSTPVAETDSVDLGSWKAKGANAFVSGSVNRLPNGQYEVRFKLYDTVKGESLGGLVLVSPESGLRMSAHKVADYIYAKLMGGRGVFATRLSYVIKTGGRYQLQISDSDGQDAHIALSSPEPIISPAWSPDGTKVAYVSFEKKKPIVYIHDLPTGRRVVVSDQKGNNSAPAWSPDGRTLAVALSRTGNTQIFAVNADGSGLRRLTQGSSIDTEPCFSPDGQSIYFTSDRGGQPQIYKMSAQGENAGAAQRVTFTGSYNTSPRVSPDGKQLAYISRVGGGFKLYIQDLQGNTATGLTDTTHDESPSFAANGQYILYATQVNGRGVLAAVSTDGRTRQVLSVQGGSVREPSWGPFMQ.

The N-terminal stretch at 1–26 is a signal peptide; sequence MSLMTKLGLRTLVASCLIAVGGAAHA.

Belongs to the TolB family. In terms of assembly, the Tol-Pal system is composed of five core proteins: the inner membrane proteins TolA, TolQ and TolR, the periplasmic protein TolB and the outer membrane protein Pal. They form a network linking the inner and outer membranes and the peptidoglycan layer.

It localises to the periplasm. Its function is as follows. Part of the Tol-Pal system, which plays a role in outer membrane invagination during cell division and is important for maintaining outer membrane integrity. This is Tol-Pal system protein TolB from Paraburkholderia phytofirmans (strain DSM 17436 / LMG 22146 / PsJN) (Burkholderia phytofirmans).